Reading from the N-terminus, the 457-residue chain is Senescence-associated protein OSA15, chloroplastic (457 aa).

The N-terminal 57 residues, 1-57 (MATRIPGTVAASGVYYNDQYRMPCKLKGIHCMALNCIPQKAKVRKCMNGYQSTFRFC), are a transit peptide targeting the chloroplast.

Belongs to the ATA15/OSA15 family. Expressed in leaves (at protein level).

It localises to the plastid. The protein localises to the chloroplast. Its function is as follows. May be involved in the regulation of leaf senescence. The polypeptide is Senescence-associated protein OSA15, chloroplastic (Oryza sativa subsp. japonica (Rice)).